A 315-amino-acid polypeptide reads, in one-letter code: L-lactate dehydrogenase (315 aa).

NAD(+)-binding positions include V16, D37, and 81–82 (GA). Substrate contacts are provided by residues Q84, R90, and 122–125 (NPVD). NAD(+)-binding positions include 120 to 122 (VSN) and S145. 150–153 (DTAR) lines the substrate pocket. The beta-D-fructose 1,6-bisphosphate site is built by R155 and H170. The active-site Proton acceptor is H177. Y224 carries the phosphotyrosine modification. T233 is a binding site for substrate.

This sequence belongs to the LDH/MDH superfamily. LDH family. In terms of assembly, homotetramer.

It localises to the cytoplasm. It catalyses the reaction (S)-lactate + NAD(+) = pyruvate + NADH + H(+). The protein operates within fermentation; pyruvate fermentation to lactate; (S)-lactate from pyruvate: step 1/1. With respect to regulation, allosterically activated by fructose 1,6-bisphosphate (FBP). In terms of biological role, catalyzes the conversion of lactate to pyruvate. In Treponema denticola (strain ATCC 35405 / DSM 14222 / CIP 103919 / JCM 8153 / KCTC 15104), this protein is L-lactate dehydrogenase.